Here is a 278-residue protein sequence, read N- to C-terminus: Orotidine 5'-phosphate decarboxylase (278 aa).

The active-site Proton donor is lysine 95.

The protein belongs to the OMP decarboxylase family. Type 2 subfamily.

The enzyme catalyses orotidine 5'-phosphate + H(+) = UMP + CO2. It functions in the pathway pyrimidine metabolism; UMP biosynthesis via de novo pathway; UMP from orotate: step 2/2. The chain is Orotidine 5'-phosphate decarboxylase from Methylibium petroleiphilum (strain ATCC BAA-1232 / LMG 22953 / PM1).